We begin with the raw amino-acid sequence, 333 residues long: Phosphoribosylformylglycinamidine cyclo-ligase (333 aa).

This sequence belongs to the AIR synthase family.

Its subcellular location is the cytoplasm. It catalyses the reaction 2-formamido-N(1)-(5-O-phospho-beta-D-ribosyl)acetamidine + ATP = 5-amino-1-(5-phospho-beta-D-ribosyl)imidazole + ADP + phosphate + H(+). It functions in the pathway purine metabolism; IMP biosynthesis via de novo pathway; 5-amino-1-(5-phospho-D-ribosyl)imidazole from N(2)-formyl-N(1)-(5-phospho-D-ribosyl)glycinamide: step 2/2. In Clostridium perfringens (strain 13 / Type A), this protein is Phosphoribosylformylglycinamidine cyclo-ligase.